The primary structure comprises 197 residues: Guanylate kinase (197 aa).

Positions 9-188 (GRLVVFSAPS…AVEAVILAIS (180 aa)) constitute a Guanylate kinase-like domain. Residue 16–23 (APSGTGKS) participates in ATP binding.

This sequence belongs to the guanylate kinase family.

It is found in the cytoplasm. The catalysed reaction is GMP + ATP = GDP + ADP. Its function is as follows. Essential for recycling GMP and indirectly, cGMP. The sequence is that of Guanylate kinase from Chlorobium luteolum (strain DSM 273 / BCRC 81028 / 2530) (Pelodictyon luteolum).